The sequence spans 23 residues: Basic phospholipase A2 intermexin (23 aa).

It belongs to the phospholipase A2 family. Group II subfamily. Ca(2+) serves as cofactor. Contains 7 disulfide bonds. In terms of tissue distribution, expressed by the venom gland.

The protein localises to the secreted. The enzyme catalyses a 1,2-diacyl-sn-glycero-3-phosphocholine + H2O = a 1-acyl-sn-glycero-3-phosphocholine + a fatty acid + H(+). Snake venom phospholipase A2 (PLA2) that shows presynaptic neurotoxicity and low myotoxicity. PLA2 catalyzes the calcium-dependent hydrolysis of the 2-acyl groups in 3-sn-phosphoglycerides. The polypeptide is Basic phospholipase A2 intermexin (Gloydius intermedius (Central Asian pit viper)).